Here is a 279-residue protein sequence, read N- to C-terminus: Fatty acid metabolism regulator protein (279 aa).

Residues 6-74 (KSPAGFAEKY…HGKPTKVNQF (69 aa)) enclose the HTH gntR-type domain. Residues 34–53 (ERELSELIGVTRTTLREVLQ) constitute a DNA-binding region (H-T-H motif).

Homodimer.

The protein resides in the cytoplasm. Multifunctional regulator of fatty acid metabolism. The protein is Fatty acid metabolism regulator protein of Vibrio cholerae serotype O1 (strain ATCC 39541 / Classical Ogawa 395 / O395).